Reading from the N-terminus, the 430-residue chain is Pyrroloquinoline quinone-dependent sugar dehydrogenase (430 aa).

A signal peptide spans 1–23; that stretch reads MARLAPHTLLLALFVFLFGSCTA. An N-linked (GlcNAc...) asparagine glycan is attached at Asn-25. Arg-57 is a pyrroloquinoline quinone binding site. N-linked (GlcNAc...) asparagine glycans are attached at residues Asn-94 and Asn-147. His-153 lines the pyrroloquinoline quinone pocket. An N-linked (GlcNAc...) asparagine glycan is attached at Asn-184. A pyrroloquinoline quinone-binding site is contributed by Arg-220. The Ca(2+) site is built by Ser-240 and Asp-242. An intrachain disulfide couples Cys-281 to Cys-316. Asn-306 is a glycosylation site (N-linked (GlcNAc...) asparagine). His-330 contacts pyrroloquinoline quinone. An N-linked (GlcNAc...) asparagine glycan is attached at Asn-341. His-350 lines the pyrroloquinoline quinone pocket. Residues Cys-388 and Cys-392 are joined by a disulfide bond.

This sequence belongs to the sugar dehydrogenase AA12 family. Ca(2+) serves as cofactor. Requires pyrroloquinoline quinone as cofactor.

The protein localises to the secreted. Its function is as follows. Pyrroloquinoline quinone (PPQ)-dependent oxidoreductase that catalyzes the oxidation of various sugars such as L-fucose. The protein is Pyrroloquinoline quinone-dependent sugar dehydrogenase of Hypocrea jecorina (strain QM6a) (Trichoderma reesei).